Here is a 294-residue protein sequence, read N- to C-terminus: Acetyl-coenzyme A carboxylase carboxyl transferase subunit beta (294 aa).

Residues 30-294 form the CoA carboxyltransferase N-terminal domain; the sequence is IMTKCPECKK…PEVGGEADGE (265 aa). Residues cysteine 34, cysteine 37, cysteine 53, and cysteine 56 each coordinate Zn(2+). A C4-type zinc finger spans residues 34–56; it reads CPECKKIMYTKELQKNLMVCNYC.

This sequence belongs to the AccD/PCCB family. In terms of assembly, acetyl-CoA carboxylase is a heterohexamer composed of biotin carboxyl carrier protein (AccB), biotin carboxylase (AccC) and two subunits each of ACCase subunit alpha (AccA) and ACCase subunit beta (AccD). The cofactor is Zn(2+).

Its subcellular location is the cytoplasm. The enzyme catalyses N(6)-carboxybiotinyl-L-lysyl-[protein] + acetyl-CoA = N(6)-biotinyl-L-lysyl-[protein] + malonyl-CoA. It functions in the pathway lipid metabolism; malonyl-CoA biosynthesis; malonyl-CoA from acetyl-CoA: step 1/1. In terms of biological role, component of the acetyl coenzyme A carboxylase (ACC) complex. Biotin carboxylase (BC) catalyzes the carboxylation of biotin on its carrier protein (BCCP) and then the CO(2) group is transferred by the transcarboxylase to acetyl-CoA to form malonyl-CoA. This Listeria monocytogenes serotype 4a (strain HCC23) protein is Acetyl-coenzyme A carboxylase carboxyl transferase subunit beta.